The primary structure comprises 211 residues: ATP-dependent Clp protease proteolytic subunit (211 aa).

Catalysis depends on Ser114, which acts as the Nucleophile. His139 is an active-site residue.

This sequence belongs to the peptidase S14 family. As to quaternary structure, fourteen ClpP subunits assemble into 2 heptameric rings which stack back to back to give a disk-like structure with a central cavity, resembling the structure of eukaryotic proteasomes.

It localises to the cytoplasm. The catalysed reaction is Hydrolysis of proteins to small peptides in the presence of ATP and magnesium. alpha-casein is the usual test substrate. In the absence of ATP, only oligopeptides shorter than five residues are hydrolyzed (such as succinyl-Leu-Tyr-|-NHMec, and Leu-Tyr-Leu-|-Tyr-Trp, in which cleavage of the -Tyr-|-Leu- and -Tyr-|-Trp bonds also occurs).. Cleaves peptides in various proteins in a process that requires ATP hydrolysis. Has a chymotrypsin-like activity. Plays a major role in the degradation of misfolded proteins. In Pseudomonas fluorescens (strain Pf0-1), this protein is ATP-dependent Clp protease proteolytic subunit.